The primary structure comprises 162 residues: NADH-quinone oxidoreductase subunit I (162 aa).

4Fe-4S ferredoxin-type domains follow at residues 53–83 (LRRY…IEAE) and 93–122 (TRYD…EGPN). Cys-63, Cys-66, Cys-69, Cys-73, Cys-102, Cys-105, Cys-108, and Cys-112 together coordinate [4Fe-4S] cluster.

It belongs to the complex I 23 kDa subunit family. As to quaternary structure, NDH-1 is composed of 14 different subunits. Subunits NuoA, H, J, K, L, M, N constitute the membrane sector of the complex. [4Fe-4S] cluster serves as cofactor.

Its subcellular location is the cell inner membrane. It carries out the reaction a quinone + NADH + 5 H(+)(in) = a quinol + NAD(+) + 4 H(+)(out). NDH-1 shuttles electrons from NADH, via FMN and iron-sulfur (Fe-S) centers, to quinones in the respiratory chain. The immediate electron acceptor for the enzyme in this species is believed to be ubiquinone. Couples the redox reaction to proton translocation (for every two electrons transferred, four hydrogen ions are translocated across the cytoplasmic membrane), and thus conserves the redox energy in a proton gradient. The sequence is that of NADH-quinone oxidoreductase subunit I from Rhodospirillum centenum (strain ATCC 51521 / SW).